Here is a 213-residue protein sequence, read N- to C-terminus: Uridine kinase (213 aa).

Residue G15–S22 coordinates ATP.

This sequence belongs to the uridine kinase family.

It localises to the cytoplasm. The enzyme catalyses uridine + ATP = UMP + ADP + H(+). It carries out the reaction cytidine + ATP = CMP + ADP + H(+). It participates in pyrimidine metabolism; CTP biosynthesis via salvage pathway; CTP from cytidine: step 1/3. The protein operates within pyrimidine metabolism; UMP biosynthesis via salvage pathway; UMP from uridine: step 1/1. The protein is Uridine kinase of Klebsiella pneumoniae (strain 342).